The chain runs to 464 residues: Alpha-2A adrenergic receptor (464 aa).

The Extracellular segment spans residues 1–47 (MFRQEQRWPRQLWPMGSLQPDSGNASWNGTEGPGGGTRATPYSLQVT). The disordered stretch occupies residues 13–34 (WPMGSLQPDSGNASWNGTEGPG). Polar residues predominate over residues 19–29 (QPDSGNASWNG). N-linked (GlcNAc...) asparagine glycosylation is found at Asn24 and Asn28. Residues 48 to 73 (VTLVCLVGLLILLTVFGNVLVIIAVF) form a helical membrane-spanning segment. Residues 74–84 (TSRALKAPQNL) lie on the Cytoplasmic side of the membrane. A helical transmembrane segment spans residues 85–110 (FLVSLASADILVATLVIPFSLANEVM). At 111-120 (GYWYFGKAWC) the chain is on the extracellular side. A disulfide bridge links Cys120 with Cys201. A helical membrane pass occupies residues 121–143 (EIYLALDVLFCTSSIVHLCAISL). The Cytoplasmic portion of the chain corresponds to 144–163 (DRYWSITQAIEYNLKRTPRR). The helical transmembrane segment at 164 to 187 (IKAIIVTVWVISAVISFPPLISFE) threads the bilayer. The Extracellular portion of the chain corresponds to 188 to 206 (KAGGGGQQPAEPRCEINDQ). The chain crosses the membrane as a helical span at residues 207-231 (KWYVISSSIGSFFAPCLIMILVYVR). The Cytoplasmic segment spans residues 232–388 (IYQIAKRRTR…RQNREKRFTF (157 aa)). The tract at residues 240 to 378 (TRVPPSRRGP…GGAKASRWRG (139 aa)) is disordered. Residues 251–268 (AHAAAPPGGAERRPNGLG) show a composition bias toward low complexity. The segment covering 312–329 (SSEHAERPPGARRPERGL) has biased composition (basic and acidic residues). Ser345 bears the Phosphoserine mark. Over residues 354–363 (AGSGTSGSGP) the composition is skewed to gly residues. Arg367 carries the omega-N-methylarginine modification. The helical transmembrane segment at 389–413 (VLAVVIGVFVVCWFPFFFTYTLTAV) threads the bilayer. Residues 414-423 (GCSVPRTLFK) are Extracellular-facing. Residues 424 to 444 (FFFWFGYCNSSLNPVIYTIFN) form a helical membrane-spanning segment. At 445–464 (HDFRRAFKKILCRGDRKRIV) the chain is on the cytoplasmic side. Cys456 carries S-palmitoyl cysteine lipidation.

It belongs to the G-protein coupled receptor 1 family. Adrenergic receptor subfamily. ADRA2A sub-subfamily. Component of the ADA2A-containing complex (ATAC), composed of KAT14, KAT2A, TADA2L, TADA3L, ZZ3, MBIP, WDR5, YEATS2, CCDC101 and DR1.

The protein resides in the cell membrane. Its function is as follows. Alpha-2 adrenergic receptors mediate the catecholamine-induced inhibition of adenylate cyclase through the action of G proteins. Component of the ATAC complex, a complex with histone acetyltransferase activity on histones H3 and H4. This Cavia porcellus (Guinea pig) protein is Alpha-2A adrenergic receptor.